The sequence spans 405 residues: 3-isopropylmalate dehydrogenase (405 aa).

86 to 104 (GAANTVWTTPDGRTDVRPE) is an NAD(+) binding site. The substrate site is built by Arg-111, Arg-121, Arg-148, and Asp-237. The Mg(2+) site is built by Asp-237, Asp-262, and Asp-266. 301–312 (GSAPDLGKQKVN) contributes to the NAD(+) binding site. A disordered region spans residues 352–371 (ADIGGSSSTSEVGDLLPTRS).

It belongs to the isocitrate and isopropylmalate dehydrogenases family. Homodimer. It depends on Mg(2+) as a cofactor. Mn(2+) is required as a cofactor.

The protein resides in the cytoplasm. The catalysed reaction is (2R,3S)-3-isopropylmalate + NAD(+) = 4-methyl-2-oxopentanoate + CO2 + NADH. The protein operates within amino-acid biosynthesis; L-leucine biosynthesis; L-leucine from 3-methyl-2-oxobutanoate: step 3/4. Catalyzes the oxidation of 3-carboxy-2-hydroxy-4-methylpentanoate (3-isopropylmalate) to 3-carboxy-4-methyl-2-oxopentanoate. The product decarboxylates to 4-methyl-2 oxopentanoate. The chain is 3-isopropylmalate dehydrogenase (LEU2) from Yarrowia lipolytica (strain CLIB 122 / E 150) (Yeast).